Reading from the N-terminus, the 371-residue chain is Alanine racemase (371 aa).

Lys-39 (proton acceptor; specific for D-alanine) is an active-site residue. Position 39 is an N6-(pyridoxal phosphate)lysine (Lys-39). Arg-137 serves as a coordination point for substrate. Catalysis depends on Tyr-266, which acts as the Proton acceptor; specific for L-alanine. Met-314 contributes to the substrate binding site.

The protein belongs to the alanine racemase family. Pyridoxal 5'-phosphate is required as a cofactor.

The catalysed reaction is L-alanine = D-alanine. It participates in amino-acid biosynthesis; D-alanine biosynthesis; D-alanine from L-alanine: step 1/1. Catalyzes the interconversion of L-alanine and D-alanine. May also act on other amino acids. The protein is Alanine racemase (alr) of Desulfovibrio desulfuricans (strain ATCC 27774 / DSM 6949 / MB).